The primary structure comprises 353 residues: Dihydroorotate dehydrogenase (quinone) (353 aa).

Residues 66–70 and Thr90 each bind FMN; that span reads AGFDK. Residue Lys70 participates in substrate binding. Residue 115 to 119 coordinates substrate; it reads NRMGF. Residues Asn143 and Asn176 each contribute to the FMN site. Asn176 contacts substrate. Catalysis depends on Ser179, which acts as the Nucleophile. Asn181 contacts substrate. Lys212 and Thr240 together coordinate FMN. 241–242 contacts substrate; it reads NT. Residues Gly264, Gly293, and 314–315 contribute to the FMN site; that span reads YT.

The protein belongs to the dihydroorotate dehydrogenase family. Type 2 subfamily. In terms of assembly, monomer. It depends on FMN as a cofactor.

It localises to the cell membrane. The enzyme catalyses (S)-dihydroorotate + a quinone = orotate + a quinol. Its pathway is pyrimidine metabolism; UMP biosynthesis via de novo pathway; orotate from (S)-dihydroorotate (quinone route): step 1/1. Catalyzes the conversion of dihydroorotate to orotate with quinone as electron acceptor. The polypeptide is Dihydroorotate dehydrogenase (quinone) (Mycolicibacterium vanbaalenii (strain DSM 7251 / JCM 13017 / BCRC 16820 / KCTC 9966 / NRRL B-24157 / PYR-1) (Mycobacterium vanbaalenii)).